The chain runs to 413 residues: Protein CDKN2AIP homolog B (413 aa).

The region spanning 21 to 118 (LERVRGQCES…TTRDELVAKV (98 aa)) is the XRN2-binding (XTBD) domain. Residues 118–266 (VKKRGNSSSN…PTRRFTTEHT (149 aa)) are disordered. Residues 183–193 (NKREAHSRTDV) show a composition bias toward basic and acidic residues.

It belongs to the CARF family.

It is found in the nucleus. The protein localises to the nucleoplasm. Functionally, may regulate DNA damage response and cell proliferation. The chain is Protein CDKN2AIP homolog B (cdkn2aip-b) from Xenopus laevis (African clawed frog).